A 202-amino-acid chain; its full sequence is Ribonuclease HII (202 aa).

The 195-residue stretch at methionine 1–glycine 195 folds into the RNase H type-2 domain. The a divalent metal cation site is built by aspartate 7, glutamate 8, and aspartate 103.

Belongs to the RNase HII family. The cofactor is Mn(2+). Mg(2+) serves as cofactor.

It localises to the cytoplasm. The enzyme catalyses Endonucleolytic cleavage to 5'-phosphomonoester.. Its function is as follows. Endonuclease that specifically degrades the RNA of RNA-DNA hybrids. The protein is Ribonuclease HII of Synechococcus sp. (strain RCC307).